Consider the following 156-residue polypeptide: Putative HTH-type transcriptional regulator YwgB (156 aa).

In terms of domain architecture, HTH rrf2-type spans lysine 2–aspartate 133.

This Bacillus subtilis (strain 168) protein is Putative HTH-type transcriptional regulator YwgB (ywgB).